The chain runs to 56 residues: Small ribosomal subunit protein uS14 (56 aa).

This sequence belongs to the universal ribosomal protein uS14 family. Component of the small ribosomal subunit (SSU). Mature yeast ribosomes consist of a small (40S) and a large (60S) subunit. The 40S small subunit contains 1 molecule of ribosomal RNA (18S rRNA) and at least 33 different proteins. The large 60S subunit contains 3 rRNA molecules (25S, 5.8S and 5S rRNA) and at least 46 different proteins.

The protein resides in the cytoplasm. The protein localises to the nucleus. Functionally, component of the ribosome, a large ribonucleoprotein complex responsible for the synthesis of proteins in the cell. The small ribosomal subunit (SSU) binds messenger RNAs (mRNAs) and translates the encoded message by selecting cognate aminoacyl-transfer RNA (tRNA) molecules. The large subunit (LSU) contains the ribosomal catalytic site termed the peptidyl transferase center (PTC), which catalyzes the formation of peptide bonds, thereby polymerizing the amino acids delivered by tRNAs into a polypeptide chain. The nascent polypeptides leave the ribosome through a tunnel in the LSU and interact with protein factors that function in enzymatic processing, targeting, and the membrane insertion of nascent chains at the exit of the ribosomal tunnel. This Schizosaccharomyces pombe (strain 972 / ATCC 24843) (Fission yeast) protein is Small ribosomal subunit protein uS14 (rps29).